The chain runs to 130 residues: Cholecystokinin (130 aa).

The signal sequence occupies residues M1–G20. The propeptide occupies Q21–Q60. At Y112 the chain carries Sulfotyrosine. Phenylalanine amide is present on F118. Residues S122 to S130 constitute a propeptide that is removed on maturation. 2 positions are modified to sulfotyrosine: Y126 and Y128.

The protein belongs to the gastrin/cholecystokinin family. Post-translationally, the precursor is cleaved by proteases to produce a number of active cholecystokinins. Expressed in brain, duodenum and small intestine.

It localises to the secreted. Its function is as follows. This peptide hormone induces gall bladder contraction and the release of pancreatic enzymes in the gut. Its function in the brain is not clear. The chain is Cholecystokinin from Trachemys scripta (Red-eared slider turtle).